An 86-amino-acid polypeptide reads, in one-letter code: Large ribosomal subunit protein uL23 (86 aa).

This sequence belongs to the universal ribosomal protein uL23 family. In terms of assembly, part of the 50S ribosomal subunit. Contacts protein L29.

Functionally, binds to 23S rRNA. One of the proteins that surrounds the polypeptide exit tunnel on the outside of the ribosome. This is Large ribosomal subunit protein uL23 from Methanothermobacter thermautotrophicus (strain ATCC 29096 / DSM 1053 / JCM 10044 / NBRC 100330 / Delta H) (Methanobacterium thermoautotrophicum).